Reading from the N-terminus, the 306-residue chain is Elongation factor Ts (306 aa).

The interval 79-82 is involved in Mg(2+) ion dislocation from EF-Tu; it reads TDFV.

Belongs to the EF-Ts family.

It localises to the cytoplasm. Its function is as follows. Associates with the EF-Tu.GDP complex and induces the exchange of GDP to GTP. It remains bound to the aminoacyl-tRNA.EF-Tu.GTP complex up to the GTP hydrolysis stage on the ribosome. This chain is Elongation factor Ts, found in Mesorhizobium japonicum (strain LMG 29417 / CECT 9101 / MAFF 303099) (Mesorhizobium loti (strain MAFF 303099)).